We begin with the raw amino-acid sequence, 446 residues long: Ribulose bisphosphate carboxylase large chain (446 aa).

Substrate is bound by residues Asn89 and Thr139. Lys141 serves as the catalytic Proton acceptor. Substrate is bound at residue Lys143. Positions 167, 169, and 170 each coordinate Mg(2+). Lys167 is subject to N6-carboxylysine. His260 (proton acceptor) is an active-site residue. Arg261, His293, and Ser345 together coordinate substrate.

Belongs to the RuBisCO large chain family. Type I subfamily. In terms of assembly, heterohexadecamer of 8 large chains and 8 small chains; disulfide-linked. The disulfide link is formed within the large subunit homodimers. It depends on Mg(2+) as a cofactor. The disulfide bond which can form in the large chain dimeric partners within the hexadecamer appears to be associated with oxidative stress and protein turnover.

The protein resides in the plastid. The protein localises to the chloroplast. It carries out the reaction 2 (2R)-3-phosphoglycerate + 2 H(+) = D-ribulose 1,5-bisphosphate + CO2 + H2O. It catalyses the reaction D-ribulose 1,5-bisphosphate + O2 = 2-phosphoglycolate + (2R)-3-phosphoglycerate + 2 H(+). In terms of biological role, ruBisCO catalyzes two reactions: the carboxylation of D-ribulose 1,5-bisphosphate, the primary event in carbon dioxide fixation, as well as the oxidative fragmentation of the pentose substrate in the photorespiration process. Both reactions occur simultaneously and in competition at the same active site. The chain is Ribulose bisphosphate carboxylase large chain from Exacum affine (Persian violet).